A 374-amino-acid chain; its full sequence is Chaperone protein DnaJ (374 aa).

Residues 3–67 (DFYQILGVSR…ETRARYDQFG (65 aa)) enclose the J domain. The disordered stretch occupies residues 99–118 (GQSSQGGRSQRRGPQQGDDL). Low complexity predominate over residues 103 to 115 (QGGRSQRRGPQQG). The CR-type zinc finger occupies 132–214 (GQQREINIPH…CGGNGVKQVR (83 aa)). Zn(2+)-binding residues include cysteine 145, cysteine 148, cysteine 162, cysteine 165, cysteine 188, cysteine 191, cysteine 202, and cysteine 205. CXXCXGXG motif repeat units follow at residues 145 to 152 (CEVCRGTG), 162 to 169 (CTTCGGSG), 188 to 195 (CPTCNGVG), and 202 to 209 (CTSCGGNG).

The protein belongs to the DnaJ family. In terms of assembly, homodimer. It depends on Zn(2+) as a cofactor.

Its subcellular location is the cytoplasm. Its function is as follows. Participates actively in the response to hyperosmotic and heat shock by preventing the aggregation of stress-denatured proteins and by disaggregating proteins, also in an autonomous, DnaK-independent fashion. Unfolded proteins bind initially to DnaJ; upon interaction with the DnaJ-bound protein, DnaK hydrolyzes its bound ATP, resulting in the formation of a stable complex. GrpE releases ADP from DnaK; ATP binding to DnaK triggers the release of the substrate protein, thus completing the reaction cycle. Several rounds of ATP-dependent interactions between DnaJ, DnaK and GrpE are required for fully efficient folding. Also involved, together with DnaK and GrpE, in the DNA replication of plasmids through activation of initiation proteins. The protein is Chaperone protein DnaJ of Prochlorococcus marinus subsp. pastoris (strain CCMP1986 / NIES-2087 / MED4).